The following is a 213-amino-acid chain: Thiamine-phosphate synthase (213 aa).

4-amino-2-methyl-5-(diphosphooxymethyl)pyrimidine is bound by residues 42–46 (QYREK) and Asp-77. Asp-78 and Asp-97 together coordinate Mg(2+). Ser-116 lines the 4-amino-2-methyl-5-(diphosphooxymethyl)pyrimidine pocket. 142 to 144 (TIS) contributes to the 2-[(2R,5Z)-2-carboxy-4-methylthiazol-5(2H)-ylidene]ethyl phosphate binding site. Residue Lys-145 coordinates 4-amino-2-methyl-5-(diphosphooxymethyl)pyrimidine. 2-[(2R,5Z)-2-carboxy-4-methylthiazol-5(2H)-ylidene]ethyl phosphate contacts are provided by residues Gly-173 and 193–194 (IS).

Belongs to the thiamine-phosphate synthase family. The cofactor is Mg(2+).

It catalyses the reaction 2-[(2R,5Z)-2-carboxy-4-methylthiazol-5(2H)-ylidene]ethyl phosphate + 4-amino-2-methyl-5-(diphosphooxymethyl)pyrimidine + 2 H(+) = thiamine phosphate + CO2 + diphosphate. The catalysed reaction is 2-(2-carboxy-4-methylthiazol-5-yl)ethyl phosphate + 4-amino-2-methyl-5-(diphosphooxymethyl)pyrimidine + 2 H(+) = thiamine phosphate + CO2 + diphosphate. The enzyme catalyses 4-methyl-5-(2-phosphooxyethyl)-thiazole + 4-amino-2-methyl-5-(diphosphooxymethyl)pyrimidine + H(+) = thiamine phosphate + diphosphate. It functions in the pathway cofactor biosynthesis; thiamine diphosphate biosynthesis; thiamine phosphate from 4-amino-2-methyl-5-diphosphomethylpyrimidine and 4-methyl-5-(2-phosphoethyl)-thiazole: step 1/1. In terms of biological role, condenses 4-methyl-5-(beta-hydroxyethyl)thiazole monophosphate (THZ-P) and 2-methyl-4-amino-5-hydroxymethyl pyrimidine pyrophosphate (HMP-PP) to form thiamine monophosphate (TMP). In Limosilactobacillus fermentum (strain NBRC 3956 / LMG 18251) (Lactobacillus fermentum), this protein is Thiamine-phosphate synthase.